Here is a 319-residue protein sequence, read N- to C-terminus: MLFWLLALLFLCAFLWNYKGQLKIADIADKYVFITGCDTGFGNLAARTFDKKGFRVIAACLTESGSAALKAKTSERLHTVLLDVTDPENVKKTAQWVKSHVGEKGLWGLINNAGVLGVLAPTDWLTVDDYREPIEVNLFGLINVTLNMLPLVKKARGRVINVSSIGGRLAFGGGGYTPSKYAVEGFNDSLRRDMKAFGVHVSCIEPGLFKTELADPIKTTEKKLAIWKHLSPDIKQQYGEGYIEKSLHRLKSNTSSVNLDLSLVVGCMDHALTSLFPKTRYIAGKDAKTFWIPLSHMPAVLQDFLLLKQKVELANPKAV.

A signal peptide spans 1-20 (MLFWLLALLFLCAFLWNYKG). Residues 34–58 (ITGC…RVIA) and aspartate 83 each bind NAD(+). Serine 164 contacts substrate. Tyrosine 176 (proton acceptor) is an active-site residue. Residue lysine 180 coordinates NAD(+).

Belongs to the short-chain dehydrogenases/reductases (SDR) family. Homotetramer.

The protein resides in the microsome membrane. The protein localises to the endoplasmic reticulum membrane. The enzyme catalyses 3beta-hydroxy-5alpha-pregnane-20-one + NAD(+) = 5alpha-pregnane-3,20-dione + NADH + H(+). It carries out the reaction 17beta-hydroxy-5alpha-androstan-3-one + NAD(+) = 5alpha-androstan-3,17-dione + NADH + H(+). The catalysed reaction is androsterone + NAD(+) = 5alpha-androstan-3,17-dione + NADH + H(+). It catalyses the reaction 5alpha-androstane-3alpha,17beta-diol + NAD(+) = 17beta-hydroxy-5alpha-androstan-3-one + NADH + H(+). The enzyme catalyses all-trans-retinol + NAD(+) = all-trans-retinal + NADH + H(+). It carries out the reaction 3alpha-hydroxy-5alpha-pregnan-20-one + NAD(+) = 5alpha-pregnane-3,20-dione + NADH + H(+). Functionally, 3-alpha-hydroxysteroid dehydrogenase that converts 3-alpha-tetrahydroprogesterone (allopregnanolone) to dihydroxyprogesterone and 3-alpha-androstanediol to dihydroxyprogesterone. Also plays a role in the biosynthesis of retinoic acid. Can utilize both NADH and NADPH. This is Dehydrogenase/reductase SDR family member 9 (Dhrs9) from Mus musculus (Mouse).